Here is a 343-residue protein sequence, read N- to C-terminus: Phenylalanine--tRNA ligase alpha subunit (343 aa).

Mg(2+) is bound at residue Glu256.

It belongs to the class-II aminoacyl-tRNA synthetase family. Phe-tRNA synthetase alpha subunit type 1 subfamily. In terms of assembly, tetramer of two alpha and two beta subunits. It depends on Mg(2+) as a cofactor.

The protein resides in the cytoplasm. The enzyme catalyses tRNA(Phe) + L-phenylalanine + ATP = L-phenylalanyl-tRNA(Phe) + AMP + diphosphate + H(+). The sequence is that of Phenylalanine--tRNA ligase alpha subunit from Prosthecochloris aestuarii (strain DSM 271 / SK 413).